The chain runs to 185 residues: Anterior gradient protein 2 (185 aa).

The first 18 residues, 1–18, serve as a signal peptide directing secretion; it reads MQTGLSLACLVLLCSVLG. Residues 25-45 form a disordered region; sequence PKRQAGATDTNGAAKSEPAPV.

The protein belongs to the AGR family. As to expression, expressed in the anterior of the dorsal ectoderm from late gastrula stages onwards. Becomes restricted to the cement gland anlage at the onset of neurulation (stages 13 to 14) and expressed exclusively in the cement gland from stage 18 onwards, with transient expression in the hatching gland during tailbud stages.

The protein localises to the secreted. In terms of biological role, involved in cement gland formation; probably specifies dorsal ectoderm to acquire an anterior fate such as cement gland and forebrain. Signals via the FGF pathway. In Xenopus laevis (African clawed frog), this protein is Anterior gradient protein 2 (ag2).